Here is a 473-residue protein sequence, read N- to C-terminus: ATP synthase subunit beta (473 aa).

ATP is bound at residue 158-165 (GGAGVGKT).

This sequence belongs to the ATPase alpha/beta chains family. In terms of assembly, F-type ATPases have 2 components, CF(1) - the catalytic core - and CF(0) - the membrane proton channel. CF(1) has five subunits: alpha(3), beta(3), gamma(1), delta(1), epsilon(1). CF(0) has three main subunits: a(1), b(2) and c(9-12). The alpha and beta chains form an alternating ring which encloses part of the gamma chain. CF(1) is attached to CF(0) by a central stalk formed by the gamma and epsilon chains, while a peripheral stalk is formed by the delta and b chains.

It localises to the cell membrane. It catalyses the reaction ATP + H2O + 4 H(+)(in) = ADP + phosphate + 5 H(+)(out). Produces ATP from ADP in the presence of a proton gradient across the membrane. The catalytic sites are hosted primarily by the beta subunits. The polypeptide is ATP synthase subunit beta (Bacillus licheniformis (strain ATCC 14580 / DSM 13 / JCM 2505 / CCUG 7422 / NBRC 12200 / NCIMB 9375 / NCTC 10341 / NRRL NRS-1264 / Gibson 46)).